We begin with the raw amino-acid sequence, 712 residues long: Ribosomal RNA large subunit methyltransferase K/L (712 aa).

A THUMP domain is found at 46 to 157 (GAYQALLHSR…RENMVVSLDL (112 aa)).

The protein belongs to the methyltransferase superfamily. RlmKL family.

The protein resides in the cytoplasm. The catalysed reaction is guanosine(2445) in 23S rRNA + S-adenosyl-L-methionine = N(2)-methylguanosine(2445) in 23S rRNA + S-adenosyl-L-homocysteine + H(+). The enzyme catalyses guanosine(2069) in 23S rRNA + S-adenosyl-L-methionine = N(2)-methylguanosine(2069) in 23S rRNA + S-adenosyl-L-homocysteine + H(+). In terms of biological role, specifically methylates the guanine in position 2445 (m2G2445) and the guanine in position 2069 (m7G2069) of 23S rRNA. This chain is Ribosomal RNA large subunit methyltransferase K/L, found in Actinobacillus pleuropneumoniae serotype 7 (strain AP76).